The chain runs to 207 residues: Thymidylate kinase (207 aa).

ATP is bound at residue 7–14 (GPEGAGKS).

This sequence belongs to the thymidylate kinase family.

It catalyses the reaction dTMP + ATP = dTDP + ADP. Its function is as follows. Phosphorylation of dTMP to form dTDP in both de novo and salvage pathways of dTTP synthesis. The protein is Thymidylate kinase of Pseudomonas putida (strain W619).